The primary structure comprises 99 residues: Putative protein YgeP (99 aa).

The polypeptide is Putative protein YgeP (ygeP) (Escherichia coli (strain K12)).